The following is a 312-amino-acid chain: Ribosomal protein uL3 glutamine methyltransferase (312 aa).

This sequence belongs to the protein N5-glutamine methyltransferase family. PrmB subfamily.

The catalysed reaction is L-glutaminyl-[ribosomal protein uL3] + S-adenosyl-L-methionine = N(5)-methyl-L-glutaminyl-[ribosomal protein uL3] + S-adenosyl-L-homocysteine + H(+). Its function is as follows. Methylates large ribosomal subunit protein uL3 on a specific glutamine residue. The protein is Ribosomal protein uL3 glutamine methyltransferase of Xylella fastidiosa (strain Temecula1 / ATCC 700964).